Here is a 141-residue protein sequence, read N- to C-terminus: Large ribosomal subunit protein uL11c (141 aa).

Belongs to the universal ribosomal protein uL11 family. Part of the ribosomal stalk of the 50S ribosomal subunit. Interacts with L10 and the large rRNA to form the base of the stalk. L10 forms an elongated spine to which L12 dimers bind in a sequential fashion forming a multimeric L10(L12)X complex.

It is found in the plastid. Its subcellular location is the chloroplast. Functionally, forms part of the ribosomal stalk which helps the ribosome interact with GTP-bound translation factors. This chain is Large ribosomal subunit protein uL11c, found in Cyanidium caldarium (Red alga).